The primary structure comprises 426 residues: G2/mitotic-specific cyclin-A (426 aa).

The span at 1 to 11 (MSMVHGSSFQI) shows a compositional bias: polar residues. The interval 1 to 22 (MSMVHGSSFQIAQDGENENQGV) is disordered.

The protein belongs to the cyclin family. Cyclin AB subfamily.

Its function is as follows. Essential for the control of the cell cycle at the G2/M (mitosis) transition. Interacts with the CDC2 and CDK2 protein kinases to form MPF. G2/M cyclins accumulate steadily during G2 and are abruptly destroyed at mitosis. The chain is G2/mitotic-specific cyclin-A from Patella vulgata (Common limpet).